The following is a 152-amino-acid chain: MSKRVQIVLNKTINKLGQTGDLVEVAPGYARNYLIPQGMGVIATPGILRQVEQRKEKEMQRLLAEKQAAEARKVALSTIGRFTIRKQVGEGEAIFGTVTTQEVADAIQAATNQEVDRRGITLPEISQTGFYKATVKLHPEVTAEIEIQVAPL.

This sequence belongs to the bacterial ribosomal protein bL9 family.

Functionally, binds to the 23S rRNA. The polypeptide is Large ribosomal subunit protein bL9 (Rippkaea orientalis (strain PCC 8801 / RF-1) (Cyanothece sp. (strain PCC 8801))).